The sequence spans 272 residues: Eukaryotic translation initiation factor 3 subunit G (272 aa).

2 disordered regions span residues 1–28 (MPAL…PTEI) and 157–188 (APTT…GRDD). Residues 190-268 (TAIRISNLSE…LILNVEWSKP (79 aa)) form the RRM domain.

This sequence belongs to the eIF-3 subunit G family. In terms of assembly, component of the eukaryotic translation initiation factor 3 (eIF-3) complex.

The protein resides in the cytoplasm. Functionally, RNA-binding component of the eukaryotic translation initiation factor 3 (eIF-3) complex, which is involved in protein synthesis of a specialized repertoire of mRNAs and, together with other initiation factors, stimulates binding of mRNA and methionyl-tRNAi to the 40S ribosome. The eIF-3 complex specifically targets and initiates translation of a subset of mRNAs involved in cell proliferation. This subunit can bind 18S rRNA. The sequence is that of Eukaryotic translation initiation factor 3 subunit G from Aedes aegypti (Yellowfever mosquito).